Consider the following 122-residue polypeptide: MKKRALPIVIFVISLQQSSQSFAVLDLLDQLFHKILNLSSRSISCSNCLKHRLQIPYFCSLHKGLNTVHKFRSLRTFQQCHELSKSNQKCHLSVMTRQVLRSRIMRALPLIKESLLLAQFLQ.

A signal peptide spans Met-1–Ser-21. The RxLR signature appears at Arg-72–Arg-75.

Belongs to the RxLR effector family.

It localises to the secreted. The protein resides in the host endoplasmic reticulum membrane. Functionally, secreted effector that dos not suppress the host cell death induced by cell death-inducing proteins. The polypeptide is Secreted RxLR effector protein 80 (Plasmopara viticola (Downy mildew of grapevine)).